Here is a 129-residue protein sequence, read N- to C-terminus: Follitropin subunit beta (129 aa).

A signal peptide spans 1–20 (MKTLQFFFLFCCWKAICCNS). 6 cysteine pairs are disulfide-bonded: Cys21–Cys69, Cys35–Cys84, Cys38–Cys122, Cys46–Cys100, Cys50–Cys102, and Cys105–Cys112. Asn25 and Asn42 each carry an N-linked (GlcNAc...) asparagine glycan.

This sequence belongs to the glycoprotein hormones subunit beta family. Heterodimer. The active follitropin is a heterodimer composed of an alpha chain/CGA shared with other hormones and a unique beta chain/FSHB shown here.

It is found in the secreted. In terms of biological role, together with the alpha chain CGA constitutes follitropin, the follicle-stimulating hormone, and provides its biological specificity to the hormone heterodimer. Binds FSHR, a G protein-coupled receptor, on target cells to activate downstream signaling pathways. Follitropin is involved in follicle development and spermatogenesis in reproductive organs. In Pan troglodytes (Chimpanzee), this protein is Follitropin subunit beta (FSHB).